The following is a 417-amino-acid chain: Prostaglandin E2 receptor EP3 subtype (417 aa).

The Extracellular segment spans residues 1-52; it reads MKATRDHASAPFCTRFNHSDPGIWAAERAVEAPNNLTLPPEPSEDCGSVSVA. N-linked (GlcNAc...) asparagine glycosylation is found at asparagine 17 and asparagine 35. Residues 53-77 traverse the membrane as a helical segment; that stretch reads FSMTMMITGFVGNALAITLVSKSYR. Residues 78 to 90 are Cytoplasmic-facing; sequence RREGKRKKSFLLC. Residues 91-111 traverse the membrane as a helical segment; it reads IGWLALTDMVGQLLTSPVVIV. Topologically, residues 112 to 130 are extracellular; it reads LYLSHQRWEQLDPSGRLCT. Residues 131–152 form a helical membrane-spanning segment; sequence FFGLTMTVFGLSSLFIASAMAV. Topologically, residues 153-174 are cytoplasmic; that stretch reads ERALATRAPHWYSSHMKTSVTR. Residues 175-196 form a helical membrane-spanning segment; it reads AVLLGVWLAVLAFALLPVLGVG. Over 197-226 the chain is Extracellular; the sequence is QYTIQWPGTWCFISTGPGGNGTNSRQNWGN. Residue asparagine 216 is glycosylated (N-linked (GlcNAc...) asparagine). The chain crosses the membrane as a helical span at residues 227-252; sequence VFFASAFAILGLSALVVTFACNLATI. Residues 253-282 lie on the Cytoplasmic side of the membrane; the sequence is KALVSRCRAKATASQSSAQWGRITTETAIQ. Residues 283–306 traverse the membrane as a helical segment; that stretch reads LMGIMCVLSVCWSPLLIMMLKMIF. A glycan (N-linked (GlcNAc...) asparagine) is linked at asparagine 307. Topologically, residues 307-326 are extracellular; sequence NHTSVEHCKTYTENQDECNF. A helical transmembrane segment spans residues 327–348; it reads FLIAVRLASLNQILDPWVYLLL. Residues 349-417 are Cytoplasmic-facing; it reads RKILLQKFCQ…HIYLHTLEHQ (69 aa).

This sequence belongs to the G-protein coupled receptor 1 family. As to quaternary structure, interacts (via C-terminus) with MKLN1.

The protein localises to the cell membrane. Its function is as follows. Receptor for prostaglandin E2 (PGE2). The various isoforms have identical ligand binding properties but interact with different second messenger systems: isoform EP3A couples to G(i)/G(o) proteins; isoform EP3B and isoform EP3C couple to G(s), and isoform EP3D couples to G(i), G(s) and G(p). Required for normal development of fever in response to pyrinogens, including IL1B, prostaglandin E2 and bacterial lipopolysaccharide (LPS). Required for normal potentiation of platelet aggregation by prostaglandin E2, and thus plays a role in the regulation of blood coagulation. Required for increased HCO3(-) secretion in the duodenum in response to mucosal acidification, and thereby contributes to the protection of the mucosa against acid-induced ulceration. Not required for normal kidney function, normal urine volume and osmolality. The chain is Prostaglandin E2 receptor EP3 subtype (PTGER3) from Bos taurus (Bovine).